A 130-amino-acid polypeptide reads, in one-letter code: Small ribosomal subunit protein uS17m (130 aa).

Belongs to the universal ribosomal protein uS17 family. In terms of assembly, component of the mitochondrial ribosome small subunit (28S) which comprises a 12S rRNA and about 30 distinct proteins.

The protein resides in the mitochondrion. This chain is Small ribosomal subunit protein uS17m (MRPS17), found in Bos taurus (Bovine).